A 436-amino-acid chain; its full sequence is Trigger factor (436 aa).

The PPIase FKBP-type domain maps to 161–246 (DDRVTVDFVG…VNKVEGLSLP (86 aa)).

It belongs to the FKBP-type PPIase family. Tig subfamily.

It is found in the cytoplasm. The catalysed reaction is [protein]-peptidylproline (omega=180) = [protein]-peptidylproline (omega=0). Its function is as follows. Involved in protein export. Acts as a chaperone by maintaining the newly synthesized protein in an open conformation. Functions as a peptidyl-prolyl cis-trans isomerase. The chain is Trigger factor from Pseudoalteromonas atlantica (strain T6c / ATCC BAA-1087).